Reading from the N-terminus, the 758-residue chain is Photosystem I P700 chlorophyll a apoprotein A1 (758 aa).

8 helical membrane-spanning segments follow: residues 78 to 101 (VFSAHFGQLSIIFLWLSGMYFHGA), 164 to 187 (LYCTAIGALVFAGLMLFAGWFHYH), 203 to 227 (LNHHLAGLLGLGSLSWARHQVHVSL), 299 to 317 (IAHHHLAIAILFLIAGHMY), 354 to 377 (WHAQLSINLAMLGSLTIVVAQHMY), 393 to 419 (LSLFTHHMWIGGFLIVGAAAHAAIFMV), 441 to 463 (AIISHLNWVCIFLGFHSFGLYIH), and 539 to 557 (FLVHHIHAFTIHVTVLILL). 2 residues coordinate [4Fe-4S] cluster: Cys-581 and Cys-590. 2 consecutive transmembrane segments (helical) span residues 597 to 618 (HVFLGLFWMYNSISVVIFHFSW) and 672 to 694 (LSAYGLFFLGAHFVWAFSLMFLF). Residue His-683 participates in chlorophyll a' binding. 2 residues coordinate chlorophyll a: Met-691 and Tyr-699. Trp-700 contributes to the phylloquinone binding site. The chain crosses the membrane as a helical span at residues 732 to 753 (AVGVTHYLLGGIATTWAFFLAR).

The protein belongs to the PsaA/PsaB family. The PsaA/B heterodimer binds the P700 chlorophyll special pair and subsequent electron acceptors. PSI consists of a core antenna complex that captures photons, and an electron transfer chain that converts photonic excitation into a charge separation. The eukaryotic PSI reaction center is composed of at least 11 subunits. P700 is a chlorophyll a/chlorophyll a' dimer, A0 is one or more chlorophyll a, A1 is one or both phylloquinones and FX is a shared 4Fe-4S iron-sulfur center. is required as a cofactor.

Its subcellular location is the plastid. It localises to the chloroplast thylakoid membrane. It carries out the reaction reduced [plastocyanin] + hnu + oxidized [2Fe-2S]-[ferredoxin] = oxidized [plastocyanin] + reduced [2Fe-2S]-[ferredoxin]. Functionally, psaA and PsaB bind P700, the primary electron donor of photosystem I (PSI), as well as the electron acceptors A0, A1 and FX. PSI is a plastocyanin-ferredoxin oxidoreductase, converting photonic excitation into a charge separation, which transfers an electron from the donor P700 chlorophyll pair to the spectroscopically characterized acceptors A0, A1, FX, FA and FB in turn. Oxidized P700 is reduced on the lumenal side of the thylakoid membrane by plastocyanin. This chain is Photosystem I P700 chlorophyll a apoprotein A1, found in Pisum sativum (Garden pea).